Here is a 445-residue protein sequence, read N- to C-terminus: ATPase PAAT (445 aa).

4 positions are modified to phosphoserine: serine 177, serine 182, serine 254, and serine 302. The interval 426–445 (PTGIPLRHYDSGERLSNGER) is disordered. Basic and acidic residues predominate over residues 432–445 (RHYDSGERLSNGER).

In terms of assembly, homodimer. Interacts with ABCB7, ABCB8/MITOSUR and ABCB10.

The protein resides in the cytoplasm. It localises to the mitochondrion. The catalysed reaction is ATP + H2O = ADP + phosphate + H(+). Functionally, ATPase that regulates mitochondrial ABC transporters ABCB7, ABCB8/MITOSUR and ABCB10. Regulates mitochondrial ferric concentration and heme biosynthesis and plays a role in the maintenance of mitochondrial homeostasis and cell survival. The sequence is that of ATPase PAAT from Homo sapiens (Human).